Reading from the N-terminus, the 280-residue chain is Transcription factor HES-1 (280 aa).

Positions Met1–Lys44 are disordered. A compositionally biased stretch (low complexity) spans Ser10–Val21. Over residues Asp26–Arg35 the composition is skewed to basic and acidic residues. The 58-residue stretch at His34 to Leu91 folds into the bHLH domain. The region spanning Tyr110–Leu143 is the Orange domain. Disordered stretches follow at residues Gly157–Gly200 and Thr254–Asn280. 2 stretches are compositionally biased toward pro residues: residues Gln164 to Gly174 and Phe181 to Gly200. Residues Thr254–Ala271 show a composition bias toward polar residues. Residues Trp275–Trp278 carry the WRPW motif motif.

As to quaternary structure, transcription repression requires formation of a complex with a corepressor protein of the Groucho/TLE family. Interacts (via WPRW motif) with TLE1, and more weakly with TLE2. Interacts with HES6. Interacts with SIRT1. Interacts with an FA complex, composed of FANCA, FANCF, FANCG and FANCL, but not of FANCC, nor FANCE. In terms of processing, (Microbial infection) Ubiquitinated via human cytomegalovirus/HCMV protein IE1 that assembles a HES1 ubiquitination complex; leading to HES1 proteasomal degradation.

It localises to the nucleus. In terms of biological role, transcriptional repressor of genes that require a bHLH protein for their transcription. May act as a negative regulator of myogenesis by inhibiting the functions of MYOD1 and ASH1. Binds DNA on N-box motifs: 5'-CACNAG-3' with high affinity and on E-box motifs: 5'-CANNTG-3' with low affinity. May play a role in a functional FA core complex response to DNA cross-link damage, being required for the stability and nuclear localization of FA core complex proteins, as well as for FANCD2 monoubiquitination in response to DNA damage. This chain is Transcription factor HES-1 (HES1), found in Homo sapiens (Human).